Reading from the N-terminus, the 280-residue chain is MSTIDHLPPLRSVIRDHDLSARKSMGQNFLLDLNLTAKIARQAGDLSACDVLEIGPGPGGLTRGLLAQGARRVLAIEKDARCLPALAEIAAVYPGRLEVMNGDALEIDPLSALTPPIRVAANLPYNVGTELLVRWLTPQIWPPYWQSLTLMFQREVAERIVARPGSKAYGRLAILAQWRADARIVMQLPPDAFTPPPKVSSSVVQITALPAPRYPADPYVLSKVVAMAFNQRRKMLRAALKGLGPDIEDRLLAAGIEPTERAERVSLEGFCALARAVAAT.

Positions 28, 30, 55, 77, 103, and 122 each coordinate S-adenosyl-L-methionine.

This sequence belongs to the class I-like SAM-binding methyltransferase superfamily. rRNA adenine N(6)-methyltransferase family. RsmA subfamily.

The protein resides in the cytoplasm. The catalysed reaction is adenosine(1518)/adenosine(1519) in 16S rRNA + 4 S-adenosyl-L-methionine = N(6)-dimethyladenosine(1518)/N(6)-dimethyladenosine(1519) in 16S rRNA + 4 S-adenosyl-L-homocysteine + 4 H(+). Functionally, specifically dimethylates two adjacent adenosines (A1518 and A1519) in the loop of a conserved hairpin near the 3'-end of 16S rRNA in the 30S particle. May play a critical role in biogenesis of 30S subunits. This Roseobacter denitrificans (strain ATCC 33942 / OCh 114) (Erythrobacter sp. (strain OCh 114)) protein is Ribosomal RNA small subunit methyltransferase A.